We begin with the raw amino-acid sequence, 126 residues long: Large ribosomal subunit protein uL22 (126 aa).

Belongs to the universal ribosomal protein uL22 family. As to quaternary structure, part of the 50S ribosomal subunit.

Its function is as follows. This protein binds specifically to 23S rRNA; its binding is stimulated by other ribosomal proteins, e.g. L4, L17, and L20. It is important during the early stages of 50S assembly. It makes multiple contacts with different domains of the 23S rRNA in the assembled 50S subunit and ribosome. The globular domain of the protein is located near the polypeptide exit tunnel on the outside of the subunit, while an extended beta-hairpin is found that lines the wall of the exit tunnel in the center of the 70S ribosome. The chain is Large ribosomal subunit protein uL22 from Paracoccus denitrificans (strain Pd 1222).